Here is a 242-residue protein sequence, read N- to C-terminus: Probable 2-phosphosulfolactate phosphatase (242 aa).

Belongs to the ComB family. The cofactor is Mg(2+).

It carries out the reaction (2R)-O-phospho-3-sulfolactate + H2O = (2R)-3-sulfolactate + phosphate. This Picosynechococcus sp. (strain ATCC 27264 / PCC 7002 / PR-6) (Agmenellum quadruplicatum) protein is Probable 2-phosphosulfolactate phosphatase.